A 246-amino-acid polypeptide reads, in one-letter code: Eukaryotic translation initiation factor 3 subunit K (246 aa).

Low complexity predominate over residues 1 to 21; it reads MENDQDQQQQQQQSQQQQPQQ. Residues 1 to 30 form a disordered region; sequence MENDQDQQQQQQQSQQQQPQQEEQEQVDVD. The PCI domain occupies 72–235; that stretch reads YLFQANSTLL…QKKADTFTFD (164 aa).

Belongs to the eIF-3 subunit K family. As to quaternary structure, component of the eukaryotic translation initiation factor 3 (eIF-3) complex.

Its subcellular location is the cytoplasm. Component of the eukaryotic translation initiation factor 3 (eIF-3) complex, which is involved in protein synthesis of a specialized repertoire of mRNAs and, together with other initiation factors, stimulates binding of mRNA and methionyl-tRNAi to the 40S ribosome. The eIF-3 complex specifically targets and initiates translation of a subset of mRNAs involved in cell proliferation. The polypeptide is Eukaryotic translation initiation factor 3 subunit K (eif3K) (Dictyostelium discoideum (Social amoeba)).